Reading from the N-terminus, the 492-residue chain is MSVDMNSQGSDSNEEDYDPNCEEEEEEEEDPGDIEDYYVGVASDVEQQGADAFDPEEYQFTCLTYKESEGALHEHMTSLASVLKVSHSVAKLILVNFHWQVSEILDRYRSNSAQLLVEARVQPNPSKHVPTAHPPHHCAVCMQFVRKENLLSLACQHQFCRSCWEQHCSVLVKDGVGVGISCMAQDCPLRTPEDFVFPLLPNEELRDKYRRYLFRDYVESHFQLQLCPGADCPMVIRVQEPRARRVQCNRCSEVFCFKCRQMYHAPTDCATIRKWLTKCADDSETANYISAHTKDCPKCNICIEKNGGCNHMQCSKCKHDFCWMCLGDWKTHGSEYYECSRYKENPDIVNQSQQAQAREALKKYLFYFERWENHNKSLQLEAQTYERIHEKIQERVMNNLGTWIDWQYLQNAAKLLAKCRYTLQYTYPYAYYMESGPRKKLFEYQQAQLEAEIENLSWKVERADSYDRGDLENQMHIAEQRRRTLLKDFHDT.

Polar residues predominate over residues 1 to 11 (MSVDMNSQGSD). Residues 1-37 (MSVDMNSQGSDSNEEDYDPNCEEEEEEEEDPGDIEDY) are disordered. Residues 12–36 (SNEEDYDPNCEEEEEEEEDPGDIED) are compositionally biased toward acidic residues. Residues 64–111 (TYKESEGALHEHMTSLASVLKVSHSVAKLILVNFHWQVSEILDRYRSN) are UBA-like. A TRIAD supradomain region spans residues 134–343 (PPHHCAVCMQ…SEYYECSRYK (210 aa)). Zn(2+)-binding residues include cysteine 138, cysteine 141, cysteine 155, histidine 157, cysteine 160, cysteine 163, cysteine 182, cysteine 187, cysteine 227, cysteine 232, cysteine 248, cysteine 251, cysteine 256, cysteine 259, histidine 264, cysteine 269, cysteine 296, and cysteine 299. The RING-type 1 zinc finger occupies 138-187 (CAVCMQFVRKENLLSLACQHQFCRSCWEQHCSVLVKDGVGVGISCMAQDC). Residues 207–269 (DKYRRYLFRD…RQMYHAPTDC (63 aa)) form an IBR-type zinc finger. An RING-type 2; atypical zinc finger spans residues 296-325 (CPKCNICIEKNGGCNHMQCSKCKHDFCWMC). Cysteine 309 is a catalytic residue. 6 residues coordinate Zn(2+): cysteine 314, cysteine 317, cysteine 322, cysteine 325, histidine 332, and cysteine 339. Serine 352 carries the phosphoserine modification. The ariadne domain stretch occupies residues 358–492 (REALKKYLFY…RTLLKDFHDT (135 aa)).

It belongs to the RBR family. Ariadne subfamily. In terms of assembly, interacts (via RING-type zinc finger 1) with UBE2L3. Interacts (via RING-type zinc finger 2) with UBE2N. Interacts with neddylated CUL5. Interacts (via RING-type 2) with GFI1B. Interacts with GFI1; prevents its ubiquitination and proteasomal degradation. Interacts with DCUN1D1 (via UBA-like domain); promotes DCUN1D1 ubiquitination. Post-translationally, ubiquitinated. Ubiquitination promotes proteasomal degradation.

The protein localises to the nucleus. It localises to the cytoplasm. It carries out the reaction [E2 ubiquitin-conjugating enzyme]-S-ubiquitinyl-L-cysteine + [acceptor protein]-L-lysine = [E2 ubiquitin-conjugating enzyme]-L-cysteine + [acceptor protein]-N(6)-ubiquitinyl-L-lysine.. The protein operates within protein modification; protein ubiquitination. With respect to regulation, autoinhibited by the ariadne domain, which masks the second RING-type zinc finger that contains the active site and inhibits the E3 activity. Inhibition is relieved upon binding to neddylated cullin-RING ubiquitin ligase complexes, which activate the E3 ligase activity of ARIH1. In terms of biological role, E3 ubiquitin-protein ligase, which catalyzes ubiquitination of target proteins together with ubiquitin-conjugating enzyme E2 UBE2L3. Acts as an atypical E3 ubiquitin-protein ligase by working together with cullin-5-RING ubiquitin ligase complex (ECS complex, also named CRL5 complex) and initiating ubiquitination of ECS substrates: associates with ECS complex and specifically mediates addition of the first ubiquitin on ECS targets. The initial ubiquitin is then elongated. E3 ubiquitin-protein ligase activity is activated upon binding to neddylated form of the ECS complex. Mediates 'Lys-6', 'Lys-48'- and 'Lys-63'-linked polyubiquitination. May play a role in myelopoiesis. The protein is E3 ubiquitin-protein ligase ARIH2 (Arih2) of Mus musculus (Mouse).